We begin with the raw amino-acid sequence, 258 residues long: NAD kinase (258 aa).

D51 functions as the Proton acceptor in the catalytic mechanism. NAD(+)-binding positions include 51-52, K56, 119-120, K130, D149, 160-165, and A184; these read DG, ND, and TAYSLS.

It belongs to the NAD kinase family. It depends on a divalent metal cation as a cofactor.

It is found in the cytoplasm. It catalyses the reaction NAD(+) + ATP = ADP + NADP(+) + H(+). In terms of biological role, involved in the regulation of the intracellular balance of NAD and NADP, and is a key enzyme in the biosynthesis of NADP. Catalyzes specifically the phosphorylation on 2'-hydroxyl of the adenosine moiety of NAD to yield NADP. The chain is NAD kinase from Thermotoga petrophila (strain ATCC BAA-488 / DSM 13995 / JCM 10881 / RKU-1).